A 178-amino-acid chain; its full sequence is NAD(P)H-quinone oxidoreductase subunit 6, chloroplastic (178 aa).

5 helical membrane-spanning segments follow: residues 10–30 (LIVAYLIQLGIYIGALAVIFF), 33–53 (IVYAAISLALVLSLIALLYLF), 64–84 (ILIYVGAINVLILFAIMLISL), 100–120 (ISAFACISLFVLLVKIILQTP), and 148–168 (LLPFELISLLLLIALIGAVSI).

It belongs to the complex I subunit 6 family. In terms of assembly, NDH is composed of at least 16 different subunits, 5 of which are encoded in the nucleus.

It localises to the plastid. The protein resides in the chloroplast thylakoid membrane. The enzyme catalyses a plastoquinone + NADH + (n+1) H(+)(in) = a plastoquinol + NAD(+) + n H(+)(out). It catalyses the reaction a plastoquinone + NADPH + (n+1) H(+)(in) = a plastoquinol + NADP(+) + n H(+)(out). In terms of biological role, NDH shuttles electrons from NAD(P)H:plastoquinone, via FMN and iron-sulfur (Fe-S) centers, to quinones in the photosynthetic chain and possibly in a chloroplast respiratory chain. The immediate electron acceptor for the enzyme in this species is believed to be plastoquinone. Couples the redox reaction to proton translocation, and thus conserves the redox energy in a proton gradient. This Chara vulgaris (Common stonewort) protein is NAD(P)H-quinone oxidoreductase subunit 6, chloroplastic (ndhG).